We begin with the raw amino-acid sequence, 454 residues long: Neuronal acetylcholine receptor subunit alpha-5 (454 aa).

The interval 1–26 (MPLRARSRKPGAGPAARAPQAGVSEP) is disordered. Positions 1 to 29 (MPLRARSRKPGAGPAARAPQAGVSEPSFV) are cleaved as a signal peptide. The segment covering 10 to 22 (PGAGPAARAPQAG) has biased composition (low complexity). The Extracellular segment spans residues 30–240 (AKSEDRLFKH…IIRRLPLFYT (211 aa)). Asn-55, Asn-169, and Asn-215 each carry an N-linked (GlcNAc...) asparagine glycan. Residues Cys-156 and Cys-170 are joined by a disulfide bond. A disulfide bond links Cys-220 and Cys-221. Transmembrane regions (helical) follow at residues 241 to 261 (LFLI…FYLP), 270 to 290 (LCTS…EIIP), and 303 to 323 (LVFT…AINI). The Cytoplasmic segment spans residues 324–416 (HHRSSSTHNA…KFIAQVLDRM (93 aa)). A helical membrane pass occupies residues 417-437 (FLWAFLLVSIIGSLVLFIPVI). The Extracellular portion of the chain corresponds to 438–454 (HKWASIIVPVHIGSTNT).

The protein belongs to the ligand-gated ion channel (TC 1.A.9) family. Acetylcholine receptor (TC 1.A.9.1) subfamily. Alpha-5/CHRNA5 sub-subfamily. In terms of assembly, neuronal AChR that forms heteropentamers composed of two different type of subunits: alpha and non-alpha (beta). CHRNA5/alpha-5 subunit is only able to form functional nAChRs when co-assembled with another alpha subunit, can be combined to CHRNA4/alpha-4 or CHRNA3/alpha-3 and CHRNB4/beta-4 or CHRNB2/beta-2 to give rise to functional receptors. Interacts with LYPD6.

It is found in the synaptic cell membrane. Its subcellular location is the cell membrane. It carries out the reaction Ca(2+)(in) = Ca(2+)(out). The catalysed reaction is K(+)(in) = K(+)(out). The enzyme catalyses Na(+)(in) = Na(+)(out). Activated by a myriad of ligands such as acetylcholine, cytisine, nicotine, choline and epibatidine. In terms of biological role, component of neuronal acetylcholine receptors (nAChRs) that function as pentameric, ligand-gated cation channels with high calcium permeability among other activities. nAChRs are excitatory neurotrasnmitter receptors formed by a collection of nAChR subunits known to mediate synaptic transmission in the nervous system and the neuromuscular junction. Each nAchR subunit confers differential attributes to channel properties, including activation, deactivation and desensitization kinetics, pH sensitivity, cation permeability, and binding to allosteric modulators. Has an accessory rather than functional role and is only able to form functional nAChRs when co-assembled with another beta subunit. Participates in pentameric assemblies along with CHRNA3, CHRNA4, CHRNB2 and CHRNB4. Increases receptor sensitivity to acetylcholine and nicotine when associated with CHRNA4 and CHRNB2. Plays a role in nicotine addiction. The sequence is that of Neuronal acetylcholine receptor subunit alpha-5 (CHRNA5) from Gallus gallus (Chicken).